Consider the following 442-residue polypeptide: Histidine--tRNA ligase (442 aa).

This sequence belongs to the class-II aminoacyl-tRNA synthetase family. Homodimer.

The protein localises to the cytoplasm. It catalyses the reaction tRNA(His) + L-histidine + ATP = L-histidyl-tRNA(His) + AMP + diphosphate + H(+). The polypeptide is Histidine--tRNA ligase (Wolinella succinogenes (strain ATCC 29543 / DSM 1740 / CCUG 13145 / JCM 31913 / LMG 7466 / NCTC 11488 / FDC 602W) (Vibrio succinogenes)).